A 298-amino-acid chain; its full sequence is Small ribosomal subunit protein uS2 (298 aa).

Residues 272-298 (EGGDWAASSAAPAGESWAEAQPTEAKW) form a disordered region.

This sequence belongs to the universal ribosomal protein uS2 family. Component of the small ribosomal subunit. Mature ribosomes consist of a small (40S) and a large (60S) subunit. The 40S subunit contains about 33 different proteins and 1 molecule of RNA (18S). The 60S subunit contains about 49 different proteins and 3 molecules of RNA (25S, 5.8S and 5S). Interacts with rps21.

The protein resides in the cytoplasm. Required for the assembly and/or stability of the 40S ribosomal subunit. Required for the processing of the 20S rRNA-precursor to mature 18S rRNA in a late step of the maturation of 40S ribosomal subunits. The protein is Small ribosomal subunit protein uS2 (rps0) of Aspergillus niger (strain ATCC MYA-4892 / CBS 513.88 / FGSC A1513).